Here is a 28-residue protein sequence, read N- to C-terminus: U1-poneritoxin-Da4a (28 aa).

Alanine amide is present on A28.

In terms of tissue distribution, expressed by the venom gland.

It is found in the secreted. Shows a broad spectrum of activity against both Gram-positive and Gram-negative bacteria. Also has antimicrobial activity against S.cerevisiae. Has insecticidal and non-hemolytic activity. The protein is U1-poneritoxin-Da4a of Dinoponera australis (Giant neotropical hunting ant).